We begin with the raw amino-acid sequence, 356 residues long: Histidinol-phosphate aminotransferase (356 aa).

At lysine 214 the chain carries N6-(pyridoxal phosphate)lysine.

Belongs to the class-II pyridoxal-phosphate-dependent aminotransferase family. Histidinol-phosphate aminotransferase subfamily. Homodimer. Pyridoxal 5'-phosphate is required as a cofactor.

The catalysed reaction is L-histidinol phosphate + 2-oxoglutarate = 3-(imidazol-4-yl)-2-oxopropyl phosphate + L-glutamate. It functions in the pathway amino-acid biosynthesis; L-histidine biosynthesis; L-histidine from 5-phospho-alpha-D-ribose 1-diphosphate: step 7/9. The polypeptide is Histidinol-phosphate aminotransferase (Shigella sonnei (strain Ss046)).